Reading from the N-terminus, the 186-residue chain is UPF0301 protein Sfri_2850 (186 aa).

This sequence belongs to the UPF0301 (AlgH) family.

The sequence is that of UPF0301 protein Sfri_2850 from Shewanella frigidimarina (strain NCIMB 400).